The following is a 633-amino-acid chain: MENSVAPFVLYSGTEPRTPGEDSLPLPAEEEGAASTAQTPCSLSASLCFSSGDDSPPQSRASAAEGSEASPPSLRSDLRVVETQWDVSSAASPESPEECARPEEPASPEDPPSRHEHARPVELESLDELGEPVPVPPGVGSVHGEPDLVIEVAGRRLRAHKAVLAARSDYFRARASRDVLRVQGVSFTALRLLLADAYSGRMAGVRPDNVAEVVAGARRLQLPGAAQRATEAMAPQLSLDNCYEVLSAGKRQRLTELRDAAYRFMSDHYLEVLREPAVFGRLSGAERDLLLRRRLCTGRACLLAAALGTTGERSGSRPQSPSGDAESRGDAAVYCYQAEAGEWRELTRLPEGAPARGCGLCVLFNYLFLAGGVAPAGPDGRARPSDQVYCYNPVTDSWSTVRPLRQARSQVQLLALDGHLYAVGGECLLSVERYDPRADRWTAVAPLPRGAFAVAHEAATCNGEIYVSGGSLFYRLLKYDPRRDEWQECPCSSSRERSADMVALDGFLYRFDLCGSRGEAQAAVGSGGGVSVFRYHCLAKQWSQCAVHLRPPGAPAGLQPFRCVALDGTIYCVSRAGTWRFVPSQDTEAGSDMGPGGSFEPEPLGSPLDVRGVLFPFVLNLPEKPDRGEQGAV.

The disordered stretch occupies residues 1-118; sequence MENSVAPFVL…EDPPSRHEHA (118 aa). The segment covering 35-60 has biased composition (polar residues); that stretch reads STAQTPCSLSASLCFSSGDDSPPQSR. The span at 61–73 shows a compositional bias: low complexity; that stretch reads ASAAEGSEASPPS. Ser70, Ser73, Ser92, Ser95, Ser107, and Ser113 each carry phosphoserine. One can recognise a BTB domain in the interval 146 to 206; that stretch reads PDLVIEVAGR…AYSGRMAGVR (61 aa). 4 Kelch repeats span residues 317-365, 366-418, 419-463, and 465-506; these read RPQS…VLFN, YLFL…ALDG, HLYA…TCNG, and IYVS…ALDG.

This Mus musculus (Mouse) protein is Kelch repeat and BTB domain-containing protein 11 (Kbtbd11).